Consider the following 299-residue polypeptide: Probable lipid kinase YegS (299 aa).

A DAGKc domain is found at 2–133 (ANFPASLLIL…IDMARVNDKT (132 aa)). ATP is bound by residues Thr-40, 66–72 (GDGTINE), and Thr-95. Mg(2+)-binding residues include Leu-215, Asp-218, and Leu-220. Residue Glu-271 is the Proton acceptor of the active site.

It belongs to the diacylglycerol/lipid kinase family. YegS lipid kinase subfamily. Mg(2+) is required as a cofactor. The cofactor is Ca(2+).

The protein localises to the cytoplasm. Probably phosphorylates lipids; the in vivo substrate is unknown. This Salmonella agona (strain SL483) protein is Probable lipid kinase YegS.